The following is a 370-amino-acid chain: Pyruvate dehydrogenase E1 component subunit alpha (370 aa).

As to quaternary structure, heterodimer of an alpha and a beta chain. Thiamine diphosphate is required as a cofactor.

It carries out the reaction N(6)-[(R)-lipoyl]-L-lysyl-[protein] + pyruvate + H(+) = N(6)-[(R)-S(8)-acetyldihydrolipoyl]-L-lysyl-[protein] + CO2. Functionally, the pyruvate dehydrogenase complex catalyzes the overall conversion of pyruvate to acetyl-CoA and CO(2). It contains multiple copies of three enzymatic components: pyruvate dehydrogenase (E1), dihydrolipoamide acetyltransferase (E2) and lipoamide dehydrogenase (E3). The protein is Pyruvate dehydrogenase E1 component subunit alpha (pdhA) of Staphylococcus epidermidis (strain ATCC 35984 / DSM 28319 / BCRC 17069 / CCUG 31568 / BM 3577 / RP62A).